The following is a 1235-amino-acid chain: Serine/threonine-protein kinase TAO2 (1235 aa).

Serine 9 is modified (phosphoserine). The Protein kinase domain occupies 28 to 281; sequence FSDLREIGHG…SEVLLKHRFV (254 aa). Residues 34–42 and lysine 57 each bind ATP; that span reads IGHGSFGAV. 106–108 contributes to the staurosporine binding site; sequence EYC. Catalysis depends on aspartate 151, which acts as the Proton acceptor. A staurosporine-binding site is contributed by glycine 155. Serine 181 carries the post-translational modification Phosphoserine. The interval 318–457 is disordered; sequence QEAPNGPGAE…PTSTSSSSAR (140 aa). Positions 350–374 are enriched in low complexity; that stretch reads SSHSVPSMSISASSQSSSVNSLADA. The span at 375–395 shows a compositional bias: acidic residues; the sequence is SDNEEEEEEEEEEEEEEEEEG. Residues 396–411 show a composition bias toward basic and acidic residues; that stretch reads PESREMAMMQEGEHTV. Serine 416 carries the phosphoserine modification. Coiled coils occupy residues 488-523 and 576-603; these read SALREQLSGYKRMRRQHQKQLLALESRLRGEREEHS and KELAALLEAQKRTYKLRKEQLKEELQEN. Serine 658 carries the phosphoserine modification. Residues 683 to 715 are a coiled coil; the sequence is LRQHEATRELELRQLQAVQRTRAELTRLQHQTE. Phosphoserine occurs at positions 777, 825, and 827. The tract at residues 892–941 is disordered; the sequence is GPVLTPVPEEEEEEEEEGGAPIGTPRDPGDGCPSPDIPPEPPPSHLRQYP. The segment covering 899–909 has biased composition (acidic residues); sequence PEEEEEEEEEG. Residues 926-935 show a composition bias toward pro residues; the sequence is PDIPPEPPPS. 3 helical membrane-spanning segments follow: residues 967 to 987, 989 to 1009, and 1014 to 1034; these read LLPLLLLLLLPLLAAQGGGGL, AALLALEVGLVGLGASYLFLC, and LPPSLFLLLAQGTALGAVLSL. A Phosphoserine modification is found at arginine 1038. The next 2 helical transmembrane spans lie at 1040–1060 and 1170–1190; these read LMGVPLGLGAAWLLAWPSLAL and LASCLPPWAVHILASWGLLKG. Residues 1210–1235 are disordered; it reads SASRQLPPGTVAGRRSQTRRALPPWR.

It belongs to the protein kinase superfamily. STE Ser/Thr protein kinase family. STE20 subfamily. As to quaternary structure, self-associates. Interacts with MAP2K3 and MAP2K6. Interacts with tubulins. Interacts with MAP3K7 and interferes with MAP3K7-binding to CHUK and thus prevents NF-kappa-B activation. Isoform 2 interacts with PCDH8; this complex may also include CDH2. The cofactor is Mg(2+). In terms of processing, autophosphorylated. Phosphorylated by ATM. Post-translationally, phosphorylated on Ser-1038 by MAPK14. This phosphorylation is required PCDH8 for endocytosis.

Its subcellular location is the cytoplasmic vesicle membrane. The protein localises to the cytoplasm. It localises to the cytoskeleton. It is found in the cell projection. The protein resides in the dendrite. The catalysed reaction is L-seryl-[protein] + ATP = O-phospho-L-seryl-[protein] + ADP + H(+). It catalyses the reaction L-threonyl-[protein] + ATP = O-phospho-L-threonyl-[protein] + ADP + H(+). Its activity is regulated as follows. Moderately inhibited by staurosporine, a broad-range protein kinase inhibitor. In terms of biological role, serine/threonine-protein kinase involved in different processes such as membrane blebbing and apoptotic bodies formation DNA damage response and MAPK14/p38 MAPK stress-activated MAPK cascade. Phosphorylates itself, MBP, activated MAPK8, MAP2K3, MAP2K6 and tubulins. Activates the MAPK14/p38 MAPK signaling pathway through the specific activation and phosphorylation of the upstream MAP2K3 and MAP2K6 kinases. In response to DNA damage, involved in the G2/M transition DNA damage checkpoint by activating the p38/MAPK14 stress-activated MAPK cascade, probably by mediating phosphorylation of upstream MAP2K3 and MAP2K6 kinases. May affect microtubule organization and stability. May play a role in the osmotic stress-MAPK8 pathway. Prevents MAP3K7-mediated activation of CHUK, and thus NF-kappa-B activation. Isoform 2, but not isoform 1, is required for PCDH8 endocytosis. Following homophilic interactions between PCDH8 extracellular domains, isoform 2 phosphorylates and activates MAPK14/p38 MAPK which in turn phosphorylates isoform 2. This process leads to PCDH8 endocytosis and CDH2 cointernalization. Both isoforms are involved in MAPK14/p38 MAPK activation. The sequence is that of Serine/threonine-protein kinase TAO2 (Taok2) from Rattus norvegicus (Rat).